The following is a 514-amino-acid chain: G-protein coupled receptor Mth (514 aa).

Residues 1–24 (MKTLLVLRISTVILVVLVIQKSYA) form the signal peptide. At 25–218 (DILECDYFDT…CLIVPSITGQ (194 aa)) the chain is on the extracellular side. 5 disulfides stabilise this stretch: C29–C83, C85–C90, C94–C188, C95–C106, and C150–C209. N45 carries an N-linked (GlcNAc...) asparagine glycan. Residues N109, N123, N170, and N198 are each glycosylated (N-linked (GlcNAc...) asparagine). The chain crosses the membrane as a helical span at residues 219 to 239 (TVVMISSLICMVLTIAVYLFV). At 240–248 (KKLQNLHGK) the chain is on the cytoplasmic side. The chain crosses the membrane as a helical span at residues 249–269 (CFICYMVCLFMGYLFLLLDLW). At 270–278 (QISISFCKP) the chain is on the extracellular side. The chain crosses the membrane as a helical span at residues 279-299 (AGFLGYFFVMAAFFWLSVISL). Residues 300–320 (HLWNTFRGSSHKANRFLFEHR) are Cytoplasmic-facing. Residues 321–341 (FLAYNTYAWGMAVVLTGITVL) traverse the membrane as a helical segment. The Extracellular segment spans residues 342–370 (ADNIVENQDWNPRVGHEGHCWIYTQAWSA). Residues 371 to 391 (MLYFYGPMVFLIAFNITMFIL) form a helical membrane-spanning segment. At 392–424 (TAKRILGVKKDIQNFAHRQERKQKLNSDKQTYT) the chain is on the cytoplasmic side. The helical transmembrane segment at 425-445 (FFLRLFIIMGLSWSLEIGSYF) threads the bilayer. Topologically, residues 446–454 (SQSNQTWAN) are extracellular. Residue N449 is glycosylated (N-linked (GlcNAc...) asparagine). The helical transmembrane segment at 455–475 (VFLVADYLNWSQGIIIFILFV) threads the bilayer. Residues 476 to 514 (LKRSTWRLLQESIRGEGEEVNNSEEEISLENTTTRNVLL) are Cytoplasmic-facing.

This sequence belongs to the G-protein coupled receptor 2 family. Mth subfamily. As to quaternary structure, homodimer.

The protein localises to the cell membrane. In terms of biological role, involved in biological aging and stress response. Essential for adult survival. Required in the presynaptic motor neuron to up-regulate neurotransmitter exocytosis at larval glutamatergic neuromuscular junctions (NMJs). Regulates a step associated with docking and clustering of vesicles at release sites. SP/Acp70A and sun are agonists that activate mth in vitro. The chain is G-protein coupled receptor Mth (mth) from Drosophila melanogaster (Fruit fly).